Here is a 344-residue protein sequence, read N- to C-terminus: Phosphate acyltransferase (344 aa).

Belongs to the PlsX family. In terms of assembly, homodimer. Probably interacts with PlsY.

The protein localises to the cytoplasm. The enzyme catalyses a fatty acyl-[ACP] + phosphate = an acyl phosphate + holo-[ACP]. The protein operates within lipid metabolism; phospholipid metabolism. Functionally, catalyzes the reversible formation of acyl-phosphate (acyl-PO(4)) from acyl-[acyl-carrier-protein] (acyl-ACP). This enzyme utilizes acyl-ACP as fatty acyl donor, but not acyl-CoA. The chain is Phosphate acyltransferase from Erwinia tasmaniensis (strain DSM 17950 / CFBP 7177 / CIP 109463 / NCPPB 4357 / Et1/99).